The chain runs to 127 residues: MTIFQGKSGKKATGGSLKQSRKKRRFELGREPTLTKLGTKTERKVIRTMGGNTKVILFTAETANVYDASEKKIKKAKIITVKANPANSHYVQRNIINKGTVIATEIGDAVVTSRPGQDGVINAKLLK.

The disordered stretch occupies residues 1–31; that stretch reads MTIFQGKSGKKATGGSLKQSRKKRRFELGRE.

Belongs to the eukaryotic ribosomal protein eS8 family. Part of the 30S ribosomal subunit.

In Thermoplasma acidophilum (strain ATCC 25905 / DSM 1728 / JCM 9062 / NBRC 15155 / AMRC-C165), this protein is Small ribosomal subunit protein eS8 (rps8e).